Here is a 194-residue protein sequence, read N- to C-terminus: Imidazoleglycerol-phosphate dehydratase (194 aa).

Belongs to the imidazoleglycerol-phosphate dehydratase family.

The protein resides in the cytoplasm. The catalysed reaction is D-erythro-1-(imidazol-4-yl)glycerol 3-phosphate = 3-(imidazol-4-yl)-2-oxopropyl phosphate + H2O. Its pathway is amino-acid biosynthesis; L-histidine biosynthesis; L-histidine from 5-phospho-alpha-D-ribose 1-diphosphate: step 6/9. This chain is Imidazoleglycerol-phosphate dehydratase, found in Thermoanaerobacter pseudethanolicus (strain ATCC 33223 / 39E) (Clostridium thermohydrosulfuricum).